We begin with the raw amino-acid sequence, 102 residues long: MRGRRRAWRGAWRGGGAADLSLLCPQVAYVRARELHTLEVTGLETVAQSKAHVASLEGLIPEDKVVLLAGSPLQNEATLGQCGVEALTTLEVVGRRLGVHNV.

One can recognise a Ubiquitin-like domain in the interval 23-99; sequence LCPQVAYVRA…LEVVGRRLGV (77 aa).

The polypeptide is Putative ubiquitin-like protein FUBI-like protein ENSP00000310146 (Homo sapiens (Human)).